The sequence spans 1791 residues: Brefeldin A-inhibited guanine nucleotide-exchange protein 2 (1791 aa).

M1 is subject to N-acetylmethionine. The segment at 2 to 224 (QESQTKSMFV…KPQSPVIQAT (223 aa)) is DCB; DCB:DCB domain and DCB:HUS domain interaction. Disordered regions lie at residues 208-292 (LEKP…DNGA) and 311-350 (AAEKQGLPEPDQAPGVPECQECTVPPAVDENSQTNGIADD). Residues S214, S218, and S227 each carry the phosphoserine modification. The segment covering 214–225 (SKPQSPVIQATA) has biased composition (polar residues). Positions 233–243 (LKQSQAQSKPT) are enriched in polar residues. T244 is modified (phosphothreonine). Residues 244–257 (TPEKTELPNGDHAR) show a composition bias toward basic and acidic residues. The residue at position 277 (S277) is a Phosphoserine. 2 positions are modified to phosphoserine: S355 and S356. Residues 515 to 535 (ADAQCVVDIYVNYDCDLNAAN) are HUS; DCB:HUS domain interaction. At S621 the chain carries Phosphoserine. Position 623 is a phosphothreonine (T623). Residue S624 is modified to Phosphoserine. T633 carries the post-translational modification Phosphothreonine. Positions 661–792 (FNKKPKRGIQ…IIMLTTDLHS (132 aa)) constitute an SEC7 domain. A phosphoserine mark is found at S707, S1518, S1520, S1521, S1532, S1535, S1541, and S1788.

As to quaternary structure, homodimer. Interacts with ARFGEF1/BIG1; both proteins are probably part of the same or very similar macromolecular complexes. Interacts with PRKAR1A, PRKAR2A, PRKAR1B, PRKAR2B, PPP1CC, PDE3A, TNFRSF1A, MYCBP and EXOC7. Interacts with GABRB1, GABRB2 and GABRB3. Post-translationally, in vitro phosphorylated by PKA reducing its GEF activity and dephosphorylated by phosphatase PP1. In terms of tissue distribution, expressed in brain (at protein level).

Its subcellular location is the cytoplasm. It is found in the membrane. It localises to the golgi apparatus. The protein localises to the perinuclear region. The protein resides in the trans-Golgi network. Its subcellular location is the endosome. It is found in the cytoskeleton. It localises to the microtubule organizing center. The protein localises to the centrosome. The protein resides in the cell projection. Its subcellular location is the dendrite. It is found in the cytoplasmic vesicle. It localises to the synapse. Inhibited by brefeldin A. Its function is as follows. Promotes guanine-nucleotide exchange on ARF1 and ARF3 and to a lower extent on ARF5 and ARF6. Promotes the activation of ARF1/ARF5/ARF6 through replacement of GDP with GTP. Involved in the regulation of Golgi vesicular transport. Required for the integrity of the endosomal compartment. Involved in trafficking from the trans-Golgi network (TGN) to endosomes and is required for membrane association of the AP-1 complex and GGA1. Seems to be involved in recycling of the transferrin receptor from recycling endosomes to the plasma membrane. Probably is involved in the exit of GABA(A) receptors from the endoplasmic reticulum. Involved in constitutive release of tumor necrosis factor receptor 1 via exosome-like vesicles; the function seems to involve PKA and specifically PRKAR2B. Proposed to act as A kinase-anchoring protein (AKAP) and may mediate crosstalk between Arf and PKA pathways. The sequence is that of Brefeldin A-inhibited guanine nucleotide-exchange protein 2 (Arfgef2) from Rattus norvegicus (Rat).